The following is a 509-amino-acid chain: Scavenger receptor class B member 1 (509 aa).

The Cytoplasmic portion of the chain corresponds to 1–11; that stretch reads MGNLSRARRVT. The helical transmembrane segment at 12–32 threads the bilayer; the sequence is AALGFIGLLFAVLGIIMIVMV. At 33–440 the chain is on the extracellular side; sequence PSIIKQQVLK…YIQLVLMPKV (408 aa). N102, N108, N173, N212, N227, N255, N310, N330, and N383 each carry an N-linked (GlcNAc...) asparagine glycan. C251 and C384 are disulfide-bonded. A helical transmembrane segment spans residues 441-461; sequence LHYAQYVLLALGCVLLLIPII. Residues 462 to 509 lie on the Cytoplasmic side of the membrane; it reads YQIRSQEKCYLFWISFKKGSKDKEAVQAYSEFLMTSAPKGTVLQEARL.

It belongs to the CD36 family. N-glycosylated. Post-translationally, the six cysteines of the extracellular domain are all involved in intramolecular disulfide bonds.

It localises to the cell membrane. The protein localises to the membrane. It is found in the caveola. Receptor for different ligands such as phospholipids, cholesterol ester, lipoproteins, phosphatidylserine and apoptotic cells. Receptor for HDL, mediating selective uptake of cholesteryl ether and HDL-dependent cholesterol efflux. Also facilitates the flux of free and esterified cholesterol between the cell surface and apoB-containing lipoproteins and modified lipoproteins, although less efficiently than HDL. May be involved in the phagocytosis of apoptotic cells, via its phosphatidylserine binding activity. The chain is Scavenger receptor class B member 1 (SCARB1) from Bos taurus (Bovine).